Reading from the N-terminus, the 657-residue chain is Pentatricopeptide repeat-containing protein At5g44230 (657 aa).

PPR repeat units follow at residues 45–79, 80–112, 113–147, 148–178, 183–213, 214–244, 245–279, 280–314, 317–347, 348–383, 384–419, and 420–450; these read KELL…GLDQ, SCYI…VQFR, NPFL…EITP, VSFT…TFRL, FVYV…MPER, DVIS…LPTK, DMVA…GIRA, DEVT…GYSP, HVVI…MNNK, NVFT…EIKP, NTVT…GVQP, and TRDH…MSVE. Residues 455–530 form a type E motif region; that stretch reads VWGALLGACR…TPAVSWVVDK (76 aa). Residues 532–562 form a type E(+) motif region; it reads GQMHKFFPGNLNHPMSNKIQDKLEELVERLT. Residues 563–657 form a type DYW motif region; sequence VLGYQPDLSS…SGDCSCGDFW (95 aa).

Belongs to the PPR family. PCMP-H subfamily.

The protein is Pentatricopeptide repeat-containing protein At5g44230 (PCMP-H17) of Arabidopsis thaliana (Mouse-ear cress).